The chain runs to 469 residues: Glutamate--tRNA ligase (469 aa).

The 'HIGH' region motif lies at 9–19 (PSPTGFLHVGG). Zn(2+) contacts are provided by cysteine 98, cysteine 100, cysteine 125, and aspartate 127. Residues 236–240 (KLSKR) carry the 'KMSKS' region motif. ATP is bound at residue lysine 239.

The protein belongs to the class-I aminoacyl-tRNA synthetase family. Glutamate--tRNA ligase type 1 subfamily. In terms of assembly, monomer. Zn(2+) serves as cofactor.

Its subcellular location is the cytoplasm. It catalyses the reaction tRNA(Glu) + L-glutamate + ATP = L-glutamyl-tRNA(Glu) + AMP + diphosphate. Functionally, catalyzes the attachment of glutamate to tRNA(Glu) in a two-step reaction: glutamate is first activated by ATP to form Glu-AMP and then transferred to the acceptor end of tRNA(Glu). This chain is Glutamate--tRNA ligase, found in Shewanella woodyi (strain ATCC 51908 / MS32).